Reading from the N-terminus, the 930-residue chain is Isoleucine--tRNA ligase (930 aa).

Positions 57–67 (PYANGHLHIGH) match the 'HIGH' region motif. Position 573 (Glu573) interacts with L-isoleucyl-5'-AMP. Residues 614-618 (KMSKS) carry the 'KMSKS' region motif. Lys617 is an ATP binding site. Zn(2+) is bound by residues Cys902, Cys905, Cys918, and Cys921.

This sequence belongs to the class-I aminoacyl-tRNA synthetase family. IleS type 1 subfamily. In terms of assembly, monomer. Zn(2+) is required as a cofactor.

It localises to the cytoplasm. It carries out the reaction tRNA(Ile) + L-isoleucine + ATP = L-isoleucyl-tRNA(Ile) + AMP + diphosphate. Functionally, catalyzes the attachment of isoleucine to tRNA(Ile). As IleRS can inadvertently accommodate and process structurally similar amino acids such as valine, to avoid such errors it has two additional distinct tRNA(Ile)-dependent editing activities. One activity is designated as 'pretransfer' editing and involves the hydrolysis of activated Val-AMP. The other activity is designated 'posttransfer' editing and involves deacylation of mischarged Val-tRNA(Ile). This chain is Isoleucine--tRNA ligase, found in Helicobacter hepaticus (strain ATCC 51449 / 3B1).